Reading from the N-terminus, the 228-residue chain is Cytidylate kinase (228 aa).

Residue 17 to 25 (GPTASGKGT) coordinates ATP.

The protein belongs to the cytidylate kinase family. Type 1 subfamily.

The protein resides in the cytoplasm. The catalysed reaction is CMP + ATP = CDP + ADP. It carries out the reaction dCMP + ATP = dCDP + ADP. This Burkholderia thailandensis (strain ATCC 700388 / DSM 13276 / CCUG 48851 / CIP 106301 / E264) protein is Cytidylate kinase.